A 247-amino-acid chain; its full sequence is Ubiquinone biosynthesis O-methyltransferase (247 aa).

S-adenosyl-L-methionine contacts are provided by R39, G70, D91, and M134.

This sequence belongs to the methyltransferase superfamily. UbiG/COQ3 family.

The enzyme catalyses a 3-demethylubiquinol + S-adenosyl-L-methionine = a ubiquinol + S-adenosyl-L-homocysteine + H(+). The catalysed reaction is a 3-(all-trans-polyprenyl)benzene-1,2-diol + S-adenosyl-L-methionine = a 2-methoxy-6-(all-trans-polyprenyl)phenol + S-adenosyl-L-homocysteine + H(+). It functions in the pathway cofactor biosynthesis; ubiquinone biosynthesis. Its function is as follows. O-methyltransferase that catalyzes the 2 O-methylation steps in the ubiquinone biosynthetic pathway. This is Ubiquinone biosynthesis O-methyltransferase from Cereibacter sphaeroides (strain KD131 / KCTC 12085) (Rhodobacter sphaeroides).